A 466-amino-acid chain; its full sequence is Asparagine--tRNA ligase (466 aa).

The protein belongs to the class-II aminoacyl-tRNA synthetase family. Homodimer.

The protein resides in the cytoplasm. The enzyme catalyses tRNA(Asn) + L-asparagine + ATP = L-asparaginyl-tRNA(Asn) + AMP + diphosphate + H(+). The protein is Asparagine--tRNA ligase of Buchnera aphidicola subsp. Baizongia pistaciae (strain Bp).